A 94-amino-acid polypeptide reads, in one-letter code: Transcription factor PRE6 (94 aa).

The interval 1-20 is disordered; that stretch reads MSSRRSSRSRQSGSSRISDD. A bHLH domain is found at 6 to 60; it reads SSRSRQSGSSRISDDQISDLVSKLQHLIPELRRRRSDKVSASKVLQETCNYIRNL.

The protein belongs to the bHLH protein family. Interacts with HFR1.

The protein localises to the cytoplasm. It localises to the nucleus. Atypical and probable non DNA-binding bHLH transcription factor that regulates light-mediated responses in day light conditions by binding and inhibiting the activity of the bHLH transcription factor HFR1, a critical regulator of light signaling and shade avoidance. Forms non-functional heterodimers with HFR1, causing liberation and activation of PIF4 from the transcriptionally inactive HFR1-PIF4 complex. The polypeptide is Transcription factor PRE6 (PRE6) (Arabidopsis thaliana (Mouse-ear cress)).